Consider the following 258-residue polypeptide: Leucyl/phenylalanyl-tRNA--protein transferase (258 aa).

This sequence belongs to the L/F-transferase family.

The protein localises to the cytoplasm. It catalyses the reaction N-terminal L-lysyl-[protein] + L-leucyl-tRNA(Leu) = N-terminal L-leucyl-L-lysyl-[protein] + tRNA(Leu) + H(+). It carries out the reaction N-terminal L-arginyl-[protein] + L-leucyl-tRNA(Leu) = N-terminal L-leucyl-L-arginyl-[protein] + tRNA(Leu) + H(+). The enzyme catalyses L-phenylalanyl-tRNA(Phe) + an N-terminal L-alpha-aminoacyl-[protein] = an N-terminal L-phenylalanyl-L-alpha-aminoacyl-[protein] + tRNA(Phe). Functions in the N-end rule pathway of protein degradation where it conjugates Leu, Phe and, less efficiently, Met from aminoacyl-tRNAs to the N-termini of proteins containing an N-terminal arginine or lysine. This chain is Leucyl/phenylalanyl-tRNA--protein transferase, found in Alkalilimnicola ehrlichii (strain ATCC BAA-1101 / DSM 17681 / MLHE-1).